The following is a 576-amino-acid chain: Arginine--tRNA ligase (576 aa).

The 'HIGH' region signature appears at 122 to 132; sequence PNVAKQMHVGH.

It belongs to the class-I aminoacyl-tRNA synthetase family. Monomer.

It is found in the cytoplasm. The catalysed reaction is tRNA(Arg) + L-arginine + ATP = L-arginyl-tRNA(Arg) + AMP + diphosphate. The protein is Arginine--tRNA ligase of Proteus mirabilis (strain HI4320).